The primary structure comprises 367 residues: Probable butyrate kinase (367 aa).

This sequence belongs to the acetokinase family.

It is found in the cytoplasm. It carries out the reaction butanoate + ATP = butanoyl phosphate + ADP. The chain is Probable butyrate kinase from Bacillus anthracis (strain A0248).